The sequence spans 298 residues: Protein pxr1 (298 aa).

A compositionally biased stretch (basic residues) spans 1 to 11; sequence MGLAAPRKRTK. A disordered region spans residues 1–23; the sequence is MGLAAPRKRTKISHDPNNTNWAR. The 55-residue stretch at 25-79 folds into the G-patch domain; the sequence is TSGFGHKILSSQGWTPGSFLGARDAAHADMFTAASAGHIRVVVKDDTLGLGARAG. Positions 145-274 are disordered; the sequence is LPERESVQQS…RPLGRQIVRG (130 aa). Over residues 151–164 the composition is skewed to polar residues; sequence VQQSRAAVETSDSN. Residues 199 to 222 are compositionally biased toward basic residues; the sequence is REKKEKKDKKEKKEKKDKKDKKRK. The span at 247–256 shows a compositional bias: polar residues; that stretch reads GLESDSTSVS.

It belongs to the PINX1 family.

Its subcellular location is the nucleus. It is found in the nucleolus. Its function is as follows. Involved in rRNA-processing at A0, A1 and A2 sites and negatively regulates telomerase. The chain is Protein pxr1 (pxr1) from Aspergillus terreus (strain NIH 2624 / FGSC A1156).